Reading from the N-terminus, the 325-residue chain is DNA-directed RNA polymerase subunit alpha (325 aa).

Residues 1–238 (MSLKSLLKGF…EHLTVFINFE (238 aa)) are alpha N-terminal domain (alpha-NTD). Residues 255 to 325 (LKASLSKHVE…LGLSFGMRDF (71 aa)) form an alpha C-terminal domain (alpha-CTD) region.

Belongs to the RNA polymerase alpha chain family. Homodimer. The RNAP catalytic core consists of 2 alpha, 1 beta, 1 beta' and 1 omega subunit. When a sigma factor is associated with the core the holoenzyme is formed, which can initiate transcription.

The catalysed reaction is RNA(n) + a ribonucleoside 5'-triphosphate = RNA(n+1) + diphosphate. Its function is as follows. DNA-dependent RNA polymerase catalyzes the transcription of DNA into RNA using the four ribonucleoside triphosphates as substrates. The sequence is that of DNA-directed RNA polymerase subunit alpha from Leptospira interrogans serogroup Icterohaemorrhagiae serovar copenhageni (strain Fiocruz L1-130).